The chain runs to 215 residues: Cytochrome b6 (215 aa).

The helical transmembrane segment at 32–52 (IFYCLGGITLTCFLVQVATGF) threads the bilayer. Residue C35 participates in heme c binding. The heme b site is built by H86 and H100. A run of 3 helical transmembrane segments spans residues 90–110 (ASMMVLMMILHVFRVYLTGGF), 116–136 (LTWVTGVILAVLTVSFGVTGY), and 186–206 (LHTFVLPLLTAVFMLMHFLMI). Residues H187 and H202 each coordinate heme b.

Belongs to the cytochrome b family. PetB subfamily. As to quaternary structure, the 4 large subunits of the cytochrome b6-f complex are cytochrome b6, subunit IV (17 kDa polypeptide, PetD), cytochrome f and the Rieske protein, while the 4 small subunits are PetG, PetL, PetM and PetN. The complex functions as a dimer. Heme b serves as cofactor. Heme c is required as a cofactor.

It is found in the plastid. Its subcellular location is the chloroplast thylakoid membrane. Functionally, component of the cytochrome b6-f complex, which mediates electron transfer between photosystem II (PSII) and photosystem I (PSI), cyclic electron flow around PSI, and state transitions. This Klebsormidium bilatum (Filamentous green alga) protein is Cytochrome b6.